Reading from the N-terminus, the 170-residue chain is Small ribosomal subunit protein bS18c (170 aa).

Disordered stretches follow at residues 1 to 59 (MYIS…IGPG) and 151 to 170 (NLRN…SSDC). Repeats lie at residues 4-10 (SKQPFRK), 11-17 (SKQPFRK), 18-24 (SKQTFHK), 25-31 (SKQPFRK), 32-38 (FKQPFRK), 39-45 (SKQPFRK), and 46-52 (SKQPFRR). The tract at residues 4-52 (SKQPFRKSKQPFRKSKQTFHKSKQPFRKFKQPFRKSKQPFRKSKQPFRR) is 7 X 7 AA tandem repeats. The segment covering 7 to 55 (PFRKSKQPFRKSKQTFHKSKQPFRKFKQPFRKSKQPFRKSKQPFRRRSR) has biased composition (basic residues).

It belongs to the bacterial ribosomal protein bS18 family. In terms of assembly, part of the 30S ribosomal subunit.

The protein resides in the plastid. The protein localises to the chloroplast. The protein is Small ribosomal subunit protein bS18c (rps18) of Zea mays (Maize).